A 318-amino-acid chain; its full sequence is MSVLLIALFSLILLLALLGAAGVFTWGERRLLGFLQERLGPNRVGPFGFLQWVADTLKLLTKEDAPPAGADLAAYRLAPALAAFPMLAGFGVVAFAPRLVISDLDVGVLFVMGMLALTVWALVLGAWGSRNRYAMLGGLRAAAQMLAYESFLGLSLMGCVLLAGSFRMGDIVAAQEGGLWFILLQPLGAALFFLAGLAAAHRLPFDLQESEQDLVAGFMTEYSGMSFALFFLGEYLAILLVAALFTTLFLGGWAGPILPGPIWFGLKVAAISVVFVWLRAALPRPRYDQLISFAWKVALPLALLNLLVTAWIAVGRAA.

9 helical membrane passes run 4–24 (LLIA…AGVF), 77–97 (LAPA…AFAP), 106–126 (VGVL…VLGA), 146–166 (LAYE…AGSF), 179–199 (LWFI…GLAA), 214–234 (LVAG…FLGE), 238–258 (ILLV…GPIL), 262–282 (IWFG…RAAL), and 293–313 (FAWK…AWIA).

It belongs to the complex I subunit 1 family. In terms of assembly, NDH-1 is composed of 14 different subunits. Subunits NuoA, H, J, K, L, M, N constitute the membrane sector of the complex.

It localises to the cell inner membrane. The catalysed reaction is a quinone + NADH + 5 H(+)(in) = a quinol + NAD(+) + 4 H(+)(out). In terms of biological role, NDH-1 shuttles electrons from NADH, via FMN and iron-sulfur (Fe-S) centers, to quinones in the respiratory chain. The immediate electron acceptor for the enzyme in this species is believed to be ubiquinone. Couples the redox reaction to proton translocation (for every two electrons transferred, four hydrogen ions are translocated across the cytoplasmic membrane), and thus conserves the redox energy in a proton gradient. This subunit may bind ubiquinone. The protein is NADH-quinone oxidoreductase subunit H 2 of Cereibacter sphaeroides (strain ATCC 17023 / DSM 158 / JCM 6121 / CCUG 31486 / LMG 2827 / NBRC 12203 / NCIMB 8253 / ATH 2.4.1.) (Rhodobacter sphaeroides).